The sequence spans 88 residues: Exodeoxyribonuclease 7 small subunit (88 aa).

A disordered region spans residues 68–88 (SDPMHPDDGEPFDPSLVSTSQ).

The protein belongs to the XseB family. As to quaternary structure, heterooligomer composed of large and small subunits.

Its subcellular location is the cytoplasm. It catalyses the reaction Exonucleolytic cleavage in either 5'- to 3'- or 3'- to 5'-direction to yield nucleoside 5'-phosphates.. Functionally, bidirectionally degrades single-stranded DNA into large acid-insoluble oligonucleotides, which are then degraded further into small acid-soluble oligonucleotides. The polypeptide is Exodeoxyribonuclease 7 small subunit (Xylella fastidiosa (strain 9a5c)).